A 191-amino-acid polypeptide reads, in one-letter code: GTP cyclohydrolase 1 (191 aa).

Positions 80, 83, and 151 each coordinate Zn(2+).

The protein belongs to the GTP cyclohydrolase I family. Toroid-shaped homodecamer, composed of two pentamers of five dimers.

It carries out the reaction GTP + H2O = 7,8-dihydroneopterin 3'-triphosphate + formate + H(+). It functions in the pathway cofactor biosynthesis; 7,8-dihydroneopterin triphosphate biosynthesis; 7,8-dihydroneopterin triphosphate from GTP: step 1/1. This chain is GTP cyclohydrolase 1, found in Nitrosospira multiformis (strain ATCC 25196 / NCIMB 11849 / C 71).